The following is a 747-amino-acid chain: Myotubularin-related protein 12 (747 aa).

The span at 1 to 14 (MLGKGVVGGGGGTK) shows a compositional bias: gly residues. The disordered stretch occupies residues 1-21 (MLGKGVVGGGGGTKGPKPSFV). The Myotubularin phosphatase domain occupies 205–643 (FDTLKDWCWE…PEIKVWAQRY (439 aa)). The tract at residues 449–558 (VPVFLLFLDC…KGQRKGMRFK (110 aa)) is interaction with MTM1. Phosphoserine is present on residues serine 564, serine 601, and serine 716.

It belongs to the protein-tyrosine phosphatase family. Non-receptor class myotubularin subfamily. Heterodimer with lipid phosphatase MTM1. Heterodimer with lipid phosphatase MTMR2.

The protein resides in the cytoplasm. It localises to the sarcoplasmic reticulum. It is found in the myofibril. Its subcellular location is the sarcomere. Its function is as follows. Acts as an adapter for the myotubularin-related phosphatases. Regulates phosphatase MTM1 protein stability and possibly its intracellular location. By stabilizing MTM1 protein levels, required for skeletal muscle maintenance but not for myogenesis. This Pongo abelii (Sumatran orangutan) protein is Myotubularin-related protein 12 (MTMR12).